A 510-amino-acid polypeptide reads, in one-letter code: Cytochrome P450 monooxygenase BOT1 (510 aa).

Residues 16–36 traverse the membrane as a helical segment; sequence PLAWAALILASFTLYSVQLVV. C454 is a binding site for heme. N-linked (GlcNAc...) asparagine glycosylation is present at N476.

This sequence belongs to the cytochrome P450 family. The cofactor is heme.

The protein resides in the membrane. Its pathway is secondary metabolite biosynthesis. Cytochrome P450 monooxygenase; part of the gene cluster that mediates the biosynthesis of botrydial. Botrydial is necessary for colonization of plant tissue by the T4 strain. It is a strain-dependent virulence factor since highly aggressive strains like SAS56 or B05 still retain substantial virulence when botrydial synthesis is impaired, since they produce also botcinic acid. The first step of botrydial biosynthesis is performed by the sesquiterpene synthase BOT2 which catalyzes the cyclization of farnesyl diphosphate (FPP) to presilphiperfolan-8-beta-ol (PSP). The cytochrome P450 monooxygenase BOT4 then catalyzes the hydroxylation at C-4 to give a probotryane intermediate. Acetylation of the hydroxyl at C-4 is carried out by the acetyltransferase BOT5, followed by the combined action of the P450 monooxygenases BOT3 and BOT1, to yield finally the glycol, via the regio- and stereospecific hydroxylations at C-10 and C-15 of the probotryane intermediates, respectively. The cleavage of the C10-C15 bond of probotryane skeleton is an intriguing and chemically important reaction, which could be mediated by some of the monooxygenases or by a combination of them. It is possible that either BOT3 or BOT1 would oxidize either the 10- or the 15-hydroxy group to the hydroperoxide derivative, which would then undergo heterolytic fragmentation to give the dialdehyde botrydial. Finally, the dehydrogenase BOT7 might be involved in the conversion of botrydial to dihydrobotrydial. This Botryotinia fuckeliana (Noble rot fungus) protein is Cytochrome P450 monooxygenase BOT1.